The sequence spans 283 residues: Large ribosomal subunit protein uL2 (283 aa).

Disordered stretches follow at residues 37–59 (AKKK…RGGG) and 219–283 (HKGI…RNSK). Residues 256–269 (WGKRHMGVKTRNNK) are compositionally biased toward basic residues.

Belongs to the universal ribosomal protein uL2 family. As to quaternary structure, part of the 50S ribosomal subunit. Forms a bridge to the 30S subunit in the 70S ribosome.

Functionally, one of the primary rRNA binding proteins. Required for association of the 30S and 50S subunits to form the 70S ribosome, for tRNA binding and peptide bond formation. It has been suggested to have peptidyltransferase activity; this is somewhat controversial. Makes several contacts with the 16S rRNA in the 70S ribosome. In Mycoplasmoides gallisepticum (strain R(low / passage 15 / clone 2)) (Mycoplasma gallisepticum), this protein is Large ribosomal subunit protein uL2.